The sequence spans 161 residues: Probable metalloprotease HVO_1016 (161 aa).

One can recognise an MPN domain in the interval 10-131 (VGIAADALDF…WEAFDQSGEV (122 aa)). E31 serves as the catalytic Proton donor/acceptor. 3 residues coordinate Zn(2+): H87, H89, and D100. A JAMM motif motif is present at residues 87 to 100 (HSHPNGVLRPSDAD).

The protein belongs to the peptidase M67B family. In terms of assembly, monomer and homodimer. Zn(2+) serves as cofactor.

Probable metalloprotease. Does not hydrolyze SAMP1- and SAMP2-protein conjugates, diglycine-AMC, Ub-AMC, hemoglobin, cytochrome c, carbonic anhydrase, creatinine phosphokinase, beta-amylase and bovine serum albumin. This is Probable metalloprotease HVO_1016 from Haloferax volcanii (strain ATCC 29605 / DSM 3757 / JCM 8879 / NBRC 14742 / NCIMB 2012 / VKM B-1768 / DS2) (Halobacterium volcanii).